The primary structure comprises 432 residues: Adenylosuccinate synthetase (432 aa).

Residues 13-19 (GDEGKGK) and 41-43 (GHT) each bind GTP. The Proton acceptor role is filled by aspartate 14. Positions 14 and 41 each coordinate Mg(2+). IMP contacts are provided by residues 14-17 (DEGK), 39-42 (NAGH), threonine 130, arginine 144, glutamine 225, threonine 240, and arginine 306. Histidine 42 serves as the catalytic Proton donor. 302–308 (TVTGRAR) serves as a coordination point for substrate. GTP-binding positions include arginine 308, 334–336 (KLD), and 416–418 (STG).

Belongs to the adenylosuccinate synthetase family. Homodimer. The cofactor is Mg(2+).

It is found in the cytoplasm. The enzyme catalyses IMP + L-aspartate + GTP = N(6)-(1,2-dicarboxyethyl)-AMP + GDP + phosphate + 2 H(+). Its pathway is purine metabolism; AMP biosynthesis via de novo pathway; AMP from IMP: step 1/2. Its function is as follows. Plays an important role in the de novo pathway of purine nucleotide biosynthesis. Catalyzes the first committed step in the biosynthesis of AMP from IMP. The chain is Adenylosuccinate synthetase from Herminiimonas arsenicoxydans.